The chain runs to 637 residues: Chloride intracellular channel protein 6 (637 aa).

The segment at 1 to 400 (MAETAEPEGG…EASEEGDPGQ (400 aa)) is disordered. Low complexity predominate over residues 35–63 (GPEASEGAAKAPSGEGAGAAAKAGATEEA). Ser-39 is subject to Phosphoserine. Positions 126 to 137 (CELRGEAAREAE) are enriched in basic and acidic residues. Residues 138–152 (GQAAAPAAPGAQEEA) show a composition bias toward low complexity. 15 repeat units span residues 155–160 (GDSVDA), 161–166 (EGSIDA), 167–172 (GGSVDA), 173–178 (AGSVDA), 179–184 (GGSIDA), 185–190 (GGSMDA), 191–196 (GGSVDA), 197–202 (GGSIDT), 203–208 (GGSVDA), 209–214 (AGSVDA), 215–220 (GGSIDT), 221–226 (GRNVDA), 227–232 (GGSIDA), 233–238 (GGSVDA), and 239–244 (GGSMDA). The tract at residues 155–244 (GDSVDAEGSI…SVDAGGSMDA (90 aa)) is 15 X 6 AA tandem repeat of [GEA]-[DGR]-[SN]-[VIM]-D-[AT]. Residues 247-256 (PAGGAHGAGG) are compositionally biased toward gly residues. Positions 305 to 314 (GSEDAAGEDG) are enriched in acidic residues. Residues 315–332 (DQGRPQEETEQQAERQEP) are compositionally biased toward basic and acidic residues. 2 positions are modified to phosphoserine: Ser-348 and Ser-393. The G-site signature appears at 420-423 (CPFS). A helical membrane pass occupies residues 422–442 (FSQRLFMILWLKGVIFNVTTV). The region spanning 466-637 (DGDVKTDVNK…AYSDVAKRMK (172 aa)) is the GST C-terminal domain.

It belongs to the chloride channel CLIC family. Monomer (soluble state). Interacts with dopamine receptors DRD2, DRD3 and DRD4. Phosphorylated. As to expression, expressed in brain, chorioretinal, lacrimal glands, submandibular glands, airway epithelium, kidney and gastric mucosa, where it is preferentially expressed in cells that secrete or transport water. In brain, it is highly expressed in choroid plexus. Not detected in pancreas, adrenal glands, heart, skeletal muscle, ileal mucosa, liver and lung.

It is found in the cytoplasm. Its subcellular location is the cell membrane. It carries out the reaction chloride(in) = chloride(out). With respect to regulation, channel activity is redox- and pH-regulated. Inhibited by IAA-94. Functionally, in the soluble state, catalyzes glutaredoxin-like thiol disulfide exchange reactions with reduced glutathione as electron donor. Can insert into membranes and form voltage-dependent chloride-selective channels. The channel opens upon membrane depolarization at positive voltages and closes at negative membrane voltages. May play a critical role in water-secreting cells, possibly through the regulation of chloride ion transport. The polypeptide is Chloride intracellular channel protein 6 (CLIC6) (Oryctolagus cuniculus (Rabbit)).